The following is a 310-amino-acid chain: tRNA dimethylallyltransferase (310 aa).

14 to 21 is a binding site for ATP; the sequence is GPTASGKT. 16 to 21 serves as a coordination point for substrate; the sequence is TASGKT. Interaction with substrate tRNA stretches follow at residues 39–42, 163–167, and 244–249; these read DSAL, QRLSR, and RCVGYR.

The protein belongs to the IPP transferase family. As to quaternary structure, monomer. Mg(2+) serves as cofactor.

The enzyme catalyses adenosine(37) in tRNA + dimethylallyl diphosphate = N(6)-dimethylallyladenosine(37) in tRNA + diphosphate. Its function is as follows. Catalyzes the transfer of a dimethylallyl group onto the adenine at position 37 in tRNAs that read codons beginning with uridine, leading to the formation of N6-(dimethylallyl)adenosine (i(6)A). In Tolumonas auensis (strain DSM 9187 / NBRC 110442 / TA 4), this protein is tRNA dimethylallyltransferase.